Consider the following 1664-residue polypeptide: MYND-type zinc finger-containing chromatin reader Zmynd8 (1664 aa).

Composition is skewed to low complexity over residues 1–16 (MESTDSSDSSGDSLKS), 30–40 (SPQPQLQSSSL), and 61–84 (SAPPGSANCSSNSSSSSPSNINVG). Disordered regions lie at residues 1-84 (MEST…INVG), 251-271 (SLSNSWSNDDKGPRRSNLRSE), and 295-323 (LALNTSGEGESSLFSDASDTKTTTAKTPE). Basic and acidic residues predominate over residues 258-271 (NDDKGPRRSNLRSE). The span at 296–308 (ALNTSGEGESSLF) shows a compositional bias: polar residues. Positions 309–320 (SDASDTKTTTAK) are enriched in low complexity. Residues 343-389 (DPFCWKCRGCGKLMPCSKCLRSFHSYCVRPATTKFDSSWKCPECQVI) form a PHD-type zinc finger. Residues Cys-346, Cys-349, Cys-358, Cys-361, His-366, Cys-369, Cys-383, and Cys-386 each contribute to the Zn(2+) site. Positions 401–504 (VSVDLLSQLL…KVCRQEANEI (104 aa)) constitute a Bromo domain. Zn(2+) is bound by residues Cys-507, Cys-510, and Cys-525. The region spanning 528-579 (PHLLLWAKLKGFPYWPAKAMGSSNSTLVNVRFFGKHDRAFVPVKDCFLYSAQ) is the PWWP domain. Disordered stretches follow at residues 672-693 (KTKATESGNESDQSPSPTKKLS), 747-815 (ESVE…QNEN), 857-905 (KIPR…RQQE), and 919-1139 (TEVM…TNTS). A compositionally biased stretch (polar residues) spans 676-690 (TESGNESDQSPSPTK). Over residues 775 to 784 (HKRKSKHARK) the composition is skewed to basic residues. Basic and acidic residues predominate over residues 785–800 (QHDNQDNQIEEAEKTG). A compositionally biased stretch (pro residues) spans 874 to 884 (IPLPTAPPPKQ). Residues 935 to 952 (PANQPQTDQVPLQQETIT) are compositionally biased toward polar residues. Low complexity predominate over residues 953-962 (AQPESQMPAA). The segment covering 1006–1019 (PPMPLPMPPPPPLP) has biased composition (pro residues). Residues 1037–1053 (TTIQRVSQKQGGKSTDT) show a composition bias toward polar residues. Over residues 1073–1097 (SPTHSPLLSTAPSPSASPKPTSTLA) the composition is skewed to low complexity. Zn(2+) is bound by residues Cys-1399, Cys-1402, Cys-1410, Cys-1411, Cys-1417, Cys-1421, His-1429, and Cys-1433. An MYND-type zinc finger spans residues 1399–1433 (CANCMREAQLYCCWNTSYCDYPCQQLHWPGHSATC). The tract at residues 1613–1648 (VPKATGRSGKNNSRMRQTYSNNINNSNPQGMRCNNN) is disordered. Positions 1620–1648 (SGKNNSRMRQTYSNNINNSNPQGMRCNNN) are enriched in polar residues.

Its subcellular location is the nucleus. The protein localises to the chromosome. Functionally, chromatin reader that recognizes specific histone signatures to regulate transcription. Plays a role in neuronal development. This is MYND-type zinc finger-containing chromatin reader Zmynd8 from Drosophila melanogaster (Fruit fly).